Reading from the N-terminus, the 201-residue chain is Molybdenum cofactor guanylyltransferase (201 aa).

Residues 14–16 (LAG), Lys-31, and Asp-104 each bind GTP. Asp-104 contributes to the Mg(2+) binding site.

Belongs to the MobA family. As to quaternary structure, monomer. Requires Mg(2+) as cofactor.

It is found in the cytoplasm. It carries out the reaction Mo-molybdopterin + GTP + H(+) = Mo-molybdopterin guanine dinucleotide + diphosphate. In terms of biological role, transfers a GMP moiety from GTP to Mo-molybdopterin (Mo-MPT) cofactor (Moco or molybdenum cofactor) to form Mo-molybdopterin guanine dinucleotide (Mo-MGD) cofactor. The protein is Molybdenum cofactor guanylyltransferase of Helicobacter pylori (strain ATCC 700392 / 26695) (Campylobacter pylori).